The chain runs to 226 residues: uncharacterized protein (226 aa).

The 137-residue stretch at 71 to 207 (EPDDITVYFD…ADGLAKKILS (137 aa)) folds into the RNase H type-1 domain.

This is an uncharacterized protein from Bacillus subtilis (strain 168).